A 314-amino-acid chain; its full sequence is Protein EXORDIUM (314 aa).

The N-terminal stretch at 1 to 21 (MYLLVFKLFLFLSLLQISVSA) is a signal peptide.

Belongs to the EXORDIUM family. In terms of tissue distribution, expressed in root tips, vascular tissue of roots, shoot apex, rosette leaves and embryos.

The protein localises to the secreted. Its subcellular location is the extracellular space. The protein resides in the apoplast. Required for cell expansion in leaves. May mediate brassinosteroid (BR)-induced leaf growth. May play a role in the control of BR responses in roots. May be involved in signaling processes that coordinate BR responses with environmental or developmental signals. This is Protein EXORDIUM (EXO) from Arabidopsis thaliana (Mouse-ear cress).